Here is a 75-residue protein sequence, read N- to C-terminus: ATP synthase subunit c (75 aa).

Transmembrane regions (helical) follow at residues 13–33 (LNVVGYGLAAIGPGIGLGILI) and 54–74 (MFLGLAFVEVLALLGFVLAFI).

This sequence belongs to the ATPase C chain family. F-type ATPases have 2 components, F(1) - the catalytic core - and F(0) - the membrane proton channel. F(1) has five subunits: alpha(3), beta(3), gamma(1), delta(1), epsilon(1). F(0) has three main subunits: a(1), b(2) and c(10-14). The alpha and beta chains form an alternating ring which encloses part of the gamma chain. F(1) is attached to F(0) by a central stalk formed by the gamma and epsilon chains, while a peripheral stalk is formed by the delta and b chains.

It is found in the cell membrane. Its function is as follows. F(1)F(0) ATP synthase produces ATP from ADP in the presence of a proton or sodium gradient. F-type ATPases consist of two structural domains, F(1) containing the extramembraneous catalytic core and F(0) containing the membrane proton channel, linked together by a central stalk and a peripheral stalk. During catalysis, ATP synthesis in the catalytic domain of F(1) is coupled via a rotary mechanism of the central stalk subunits to proton translocation. Functionally, key component of the F(0) channel; it plays a direct role in translocation across the membrane. A homomeric c-ring of between 10-14 subunits forms the central stalk rotor element with the F(1) delta and epsilon subunits. The chain is ATP synthase subunit c from Bifidobacterium adolescentis (strain ATCC 15703 / DSM 20083 / NCTC 11814 / E194a).